The primary structure comprises 424 residues: Cyclin-dependent kinase D-1 (424 aa).

The Protein kinase domain maps to tyrosine 19–phenylalanine 299. ATP contacts are provided by residues leucine 25 to valine 33 and lysine 48. Threonine 29 bears the Phosphothreonine mark. The residue at position 30 (tyrosine 30) is a Phosphotyrosine. Residue aspartate 141 is the Proton acceptor of the active site. Position 168 is a phosphoserine (serine 168). Threonine 174 carries the phosphothreonine modification. Disordered regions lie at residues proline 303–leucine 337 and alanine 359–glutamate 424. Over residues alanine 359–aspartate 374 the composition is skewed to basic and acidic residues.

Belongs to the protein kinase superfamily. CMGC Ser/Thr protein kinase family. CDC2/CDKX subfamily. As to quaternary structure, interacts with CYCH1-1. In terms of tissue distribution, expressed in actively dividing cells of roots, leaves and shoots. Expressed in the intercalary meristem and the elongation zone of internodes.

The protein resides in the nucleus. It catalyses the reaction L-seryl-[protein] + ATP = O-phospho-L-seryl-[protein] + ADP + H(+). The catalysed reaction is L-threonyl-[protein] + ATP = O-phospho-L-threonyl-[protein] + ADP + H(+). It carries out the reaction [DNA-directed RNA polymerase] + ATP = phospho-[DNA-directed RNA polymerase] + ADP + H(+). In terms of biological role, CDK-activating kinase that may control G1/S phase progression. May control the rate of cell differentiation to accomplish proper development of organs, or in response to a changing environment. Forms a complex with cyclin CYCH1-1 that phosphorylates CDKA-1 and the C-terminal domain (CTD) of the large subunit of RNA polymerase II. The chain is Cyclin-dependent kinase D-1 (CDKD-1) from Oryza sativa subsp. japonica (Rice).